Consider the following 395-residue polypeptide: Prostaglandin D2 receptor 2 (395 aa).

Over 1-33 (MSANATLKPLCPILEQMSRLQSHSNTSIRYIDH) the chain is Extracellular. N-linked (GlcNAc...) asparagine glycosylation is found at Asn4 and Asn25. Residues 34–56 (AAVLLHGLASLLGLVENGVILFV) form a helical membrane-spanning segment. Over 57 to 67 (VGCRMRQTVVT) the chain is Cytoplasmic. The chain crosses the membrane as a helical span at residues 68–89 (TWVLHLALSDLLASASLPFFTY). Residues 90–106 (FLAVGHSWELGTTFCKL) are Extracellular-facing. Cysteines 104 and 182 form a disulfide. A helical membrane pass occupies residues 107–127 (HSSIFFLNMFASGFLLSAISL). Residues 128-146 (DRCLQVVRPVWAQNHRTVA) are Cytoplasmic-facing. Residues 147-168 (AAHKVCLVLWALAVLNTVPYFV) form a helical membrane-spanning segment. The Extracellular segment spans residues 169-210 (FRDTISRLDGRIMCYYNVLLLNPGPDRDATCNSRQVALAVSK). A helical membrane pass occupies residues 211–231 (FLLAFLVPLAIIASSHAAVSL). Residues 232 to 247 (RLQHRGRRRPGRFVRL) are Cytoplasmic-facing. Residues 248–269 (VAAVVAAFALCWGPYHVFSLLE) form a helical membrane-spanning segment. Residues 270-288 (ARAHANPGLRPLVWRGLPF) lie on the Extracellular side of the membrane. A helical membrane pass occupies residues 289-308 (VTSLAFFNSVANPVLYVLTC). Over 309–395 (PDMLRKLRRS…LNRALSSTSS (87 aa)) the chain is Cytoplasmic. The Involved in the recycling of CRTH2 motif lies at 330–333 (DSEL). 2 positions are modified to phosphoserine: Ser331 and Ser345. Positions 333-363 (LGGAGSSRRRRTSSTARSASPLALCSRPEEP) are disordered.

The protein belongs to the G-protein coupled receptor 1 family. Post-translationally, phosphorylated. Widespread expression. High expression in stomach, small intestine, heart and thymus. Intermediate expression in colon, spinal cord and peripheral blood and low expression in brain, skeletal muscle and spleen. Expressed also on Th2- and Tc2- type cells, eosinophils and basophils.

It localises to the cell membrane. In terms of biological role, receptor for prostaglandin D2 (PGD2). Coupled to the G(i)-protein. Receptor activation may result in pertussis toxin-sensitive decreases in cAMP levels and Ca(2+) mobilization. PI3K signaling is also implicated in mediating PTGDR2 effects. PGD2 induced receptor internalization. CRTH2 internalization can be regulated by diverse kinases such as, PKC, PKA, GRK2, GPRK5/GRK5 and GRK6. Receptor activation is responsible, at least in part, in immune regulation and allergic/inflammation responses. In Homo sapiens (Human), this protein is Prostaglandin D2 receptor 2 (PTGDR2).